Reading from the N-terminus, the 161-residue chain is MSQLTHINAAGEAHMVDVSAKAETVREARAEAFVTMRSETLAMIIDGSHHKGDVFATARIAGIQAAKRTWELIPLCHPLLLSKVEVQLQAEPEHNRVRIESLCRLTGKTGVEMEALTAASVAALTIYDMCKAVQKDMVIGPVRLLAKSGGKSGDFKVDAHD.

Substrate-binding positions include 75–77 (LCH) and 113–114 (ME). Asp128 is a catalytic residue.

This sequence belongs to the MoaC family. As to quaternary structure, homohexamer; trimer of dimers.

It catalyses the reaction (8S)-3',8-cyclo-7,8-dihydroguanosine 5'-triphosphate = cyclic pyranopterin phosphate + diphosphate. Its pathway is cofactor biosynthesis; molybdopterin biosynthesis. Functionally, catalyzes the conversion of (8S)-3',8-cyclo-7,8-dihydroguanosine 5'-triphosphate to cyclic pyranopterin monophosphate (cPMP). This Citrobacter koseri (strain ATCC BAA-895 / CDC 4225-83 / SGSC4696) protein is Cyclic pyranopterin monophosphate synthase.